The chain runs to 90 residues: Hypnin-A3 (90 aa).

Functionally, lectin specific for core(alpha 1-6)fucosylated N-glycans. Inhibits platelet aggregation. This chain is Hypnin-A3, found in Hypnea japonica (Japanese red alga).